Here is a 415-residue protein sequence, read N- to C-terminus: Gamma-glutamyl phosphate reductase (415 aa).

It belongs to the gamma-glutamyl phosphate reductase family.

It localises to the cytoplasm. The catalysed reaction is L-glutamate 5-semialdehyde + phosphate + NADP(+) = L-glutamyl 5-phosphate + NADPH + H(+). Its pathway is amino-acid biosynthesis; L-proline biosynthesis; L-glutamate 5-semialdehyde from L-glutamate: step 2/2. Its function is as follows. Catalyzes the NADPH-dependent reduction of L-glutamate 5-phosphate into L-glutamate 5-semialdehyde and phosphate. The product spontaneously undergoes cyclization to form 1-pyrroline-5-carboxylate. In Bacillus subtilis (strain 168), this protein is Gamma-glutamyl phosphate reductase.